Consider the following 184-residue polypeptide: Ribosome-recycling factor (184 aa).

It belongs to the RRF family.

The protein resides in the cytoplasm. Its function is as follows. Responsible for the release of ribosomes from messenger RNA at the termination of protein biosynthesis. May increase the efficiency of translation by recycling ribosomes from one round of translation to another. This chain is Ribosome-recycling factor, found in Leptospira borgpetersenii serovar Hardjo-bovis (strain JB197).